Consider the following 202-residue polypeptide: Endothelin-1 (202 aa).

The signal sequence occupies residues 1 to 23 (MDYFSMMVSLLLVAFHGAPETAA). Residues 24–49 (SGTELSTGAENPGEKPPASAPWRPRR) are disordered. A propeptide spanning residues 24–50 (SGTELSTGAENPGEKPPASAPWRPRRS) is cleaved from the precursor. 2 disulfide bridges follow: Cys53–Cys67 and Cys55–Cys63. Residues 74–202 (VNTPGHIVPY…EQKVTHNRTH (129 aa)) constitute a propeptide that is removed on maturation. The segment at 110-124 (CQCTSPHDKKCWNFC) is endothelin-like.

The protein belongs to the endothelin/sarafotoxin family.

The protein localises to the secreted. In terms of biological role, endothelins are endothelium-derived vasoconstrictor peptides. Probable ligand for G-protein coupled receptors EDNRA and EDNRB which activates PTK2B, BCAR1, BCAR3 and, GTPases RAP1 and RHOA cascade in glomerular mesangial cells. Also binds the DEAR/FBXW7-AS1 receptor. Promotes mesenteric arterial wall remodeling via activation of ROCK signaling and subsequent colocalization of NFATC3 with F-actin filaments. NFATC3 then translocates to the nucleus where it subsequently promotes the transcription of the smooth muscle hypertrophy and differentiation marker ACTA2. This is Endothelin-1 (EDN1) from Oryctolagus cuniculus (Rabbit).